The sequence spans 322 residues: Lipoyl synthase (322 aa).

[4Fe-4S] cluster-binding residues include Cys-69, Cys-74, Cys-80, Cys-95, Cys-99, Cys-102, and Ser-309. The 218-residue stretch at 81–298 (FNHGTATFMI…KEIALELGFT (218 aa)) folds into the Radical SAM core domain.

This sequence belongs to the radical SAM superfamily. Lipoyl synthase family. Requires [4Fe-4S] cluster as cofactor.

The protein localises to the cytoplasm. It carries out the reaction [[Fe-S] cluster scaffold protein carrying a second [4Fe-4S](2+) cluster] + N(6)-octanoyl-L-lysyl-[protein] + 2 oxidized [2Fe-2S]-[ferredoxin] + 2 S-adenosyl-L-methionine + 4 H(+) = [[Fe-S] cluster scaffold protein] + N(6)-[(R)-dihydrolipoyl]-L-lysyl-[protein] + 4 Fe(3+) + 2 hydrogen sulfide + 2 5'-deoxyadenosine + 2 L-methionine + 2 reduced [2Fe-2S]-[ferredoxin]. It functions in the pathway protein modification; protein lipoylation via endogenous pathway; protein N(6)-(lipoyl)lysine from octanoyl-[acyl-carrier-protein]: step 2/2. Functionally, catalyzes the radical-mediated insertion of two sulfur atoms into the C-6 and C-8 positions of the octanoyl moiety bound to the lipoyl domains of lipoate-dependent enzymes, thereby converting the octanoylated domains into lipoylated derivatives. This is Lipoyl synthase from Photobacterium profundum (strain SS9).